Consider the following 88-residue polypeptide: Small ribosomal subunit protein uS17 (88 aa).

The protein belongs to the universal ribosomal protein uS17 family. In terms of assembly, part of the 30S ribosomal subunit.

In terms of biological role, one of the primary rRNA binding proteins, it binds specifically to the 5'-end of 16S ribosomal RNA. The sequence is that of Small ribosomal subunit protein uS17 from Hahella chejuensis (strain KCTC 2396).